We begin with the raw amino-acid sequence, 366 residues long: Histone-lysine N-methyltransferase SETD7 (366 aa).

3 MORN repeats span residues 36–58 (FEGHFVHGEKNGRGKFYFFDGST), 59–81 (LEGFYVDDALQGQGIYTYEDGGS), and 106–128 (FKGQYKDNVRHGVCWIYYPDGGS). Residues 214 to 336 (ERVYVNDSLI…KDEELTVAYG (123 aa)) form the SET domain. S-adenosyl-L-methionine-binding positions include 226-228 (AGE), N296, and H297.

Belongs to the class V-like SAM-binding methyltransferase superfamily. Histone-lysine methyltransferase family. SET7 subfamily.

The protein resides in the nucleus. Its subcellular location is the chromosome. It catalyses the reaction L-lysyl(4)-[histone H3] + S-adenosyl-L-methionine = N(6)-methyl-L-lysyl(4)-[histone H3] + S-adenosyl-L-homocysteine + H(+). The enzyme catalyses L-lysyl-[protein] + S-adenosyl-L-methionine = N(6)-methyl-L-lysyl-[protein] + S-adenosyl-L-homocysteine + H(+). Its function is as follows. Histone methyltransferase that specifically monomethylates 'Lys-4' of histone H3. H3 'Lys-4' methylation represents a specific tag for epigenetic transcriptional activation. Plays a central role in the transcriptional activation of genes. Also has methyltransferase activity toward non-histone proteins. The polypeptide is Histone-lysine N-methyltransferase SETD7 (setd7) (Xenopus tropicalis (Western clawed frog)).